A 903-amino-acid polypeptide reads, in one-letter code: HTH-type transcriptional regulator MalT (903 aa).

39–46 provides a ligand contact to ATP; the sequence is CPAGYGKT. The HTH luxR-type domain maps to 832 to 897; that stretch reads ELIRTSPLTQ…DAVQQAQRLL (66 aa). Positions 856 to 875 form a DNA-binding region, H-T-H motif; it reads NDQIAGELEVAATTIKTHIR.

Belongs to the MalT family. In terms of assembly, monomer in solution. Oligomerizes to an active state in the presence of the positive effectors ATP and maltotriose.

Activated by ATP and maltotriose, which are both required for DNA binding. Its function is as follows. Positively regulates the transcription of the maltose regulon whose gene products are responsible for uptake and catabolism of malto-oligosaccharides. Specifically binds to the promoter region of its target genes, recognizing a short DNA motif called the MalT box. This chain is HTH-type transcriptional regulator MalT, found in Yersinia enterocolitica serotype O:8 / biotype 1B (strain NCTC 13174 / 8081).